We begin with the raw amino-acid sequence, 275 residues long: ADP-dependent (S)-NAD(P)H-hydrate dehydratase (275 aa).

The YjeF C-terminal domain occupies 5 to 273 (TDEILAKVIK…EEIPLFMKKY (269 aa)). Ala-40, Gly-103, and His-151 together coordinate (6S)-NADPHX. AMP is bound at residue Gly-214. Asp-215 contacts (6S)-NADPHX.

This sequence belongs to the NnrD/CARKD family. Homotetramer. The cofactor is Mg(2+).

The catalysed reaction is (6S)-NADHX + ADP = AMP + phosphate + NADH + H(+). The enzyme catalyses (6S)-NADPHX + ADP = AMP + phosphate + NADPH + H(+). In terms of biological role, catalyzes the dehydration of the S-form of NAD(P)HX at the expense of ADP, which is converted to AMP. Together with NAD(P)HX epimerase, which catalyzes the epimerization of the S- and R-forms, the enzyme allows the repair of both epimers of NAD(P)HX, a damaged form of NAD(P)H that is a result of enzymatic or heat-dependent hydration. This chain is ADP-dependent (S)-NAD(P)H-hydrate dehydratase, found in Lactococcus lactis subsp. lactis (strain IL1403) (Streptococcus lactis).